The following is a 456-amino-acid chain: O-phospho-L-seryl-tRNA:Cys-tRNA synthase 2 (456 aa).

Pyridoxal 5'-phosphate contacts are provided by residues 146–147, N251, and 274–276; these read AR and SGH. K277 is subject to N6-(pyridoxal phosphate)lysine.

Belongs to the SepCysS family. As to quaternary structure, homodimer. Interacts with SepRS. Requires pyridoxal 5'-phosphate as cofactor.

It catalyses the reaction O-phospho-L-seryl-tRNA(Cys) + hydrogen sulfide + H(+) = L-cysteinyl-tRNA(Cys) + phosphate. Functionally, converts O-phospho-L-seryl-tRNA(Cys) (Sep-tRNA(Cys)) to L-cysteinyl-tRNA(Cys) (Cys-tRNA(Cys)). This chain is O-phospho-L-seryl-tRNA:Cys-tRNA synthase 2, found in Methanospirillum hungatei JF-1 (strain ATCC 27890 / DSM 864 / NBRC 100397 / JF-1).